Here is a 257-residue protein sequence, read N- to C-terminus: MVALRLIPCLDVANGRVVKGVNFVNLRDSGDPVELACRYSEAGADELVFLDIRASVENRKTLVDLVSRTAKSVKIPFTVGGGINSIVTINDLLRAGADKVSLNSSAVKNPKIISQSSKKFGTQCIVIAIDARKKHNVSNEWEVYVKGGRENTGLDVVNWAKKVEELGAGEILLTSMDGDGTQNGYDLLLTKTVAKAVNIPVIASGGAGSLEDIFDVFTEGEASAALLASLLHDKKLTIEEIKSFLINKKLIIRPNEK.

Catalysis depends on residues aspartate 11 and aspartate 130.

Belongs to the HisA/HisF family. In terms of assembly, heterodimer of HisH and HisF.

It localises to the cytoplasm. The catalysed reaction is 5-[(5-phospho-1-deoxy-D-ribulos-1-ylimino)methylamino]-1-(5-phospho-beta-D-ribosyl)imidazole-4-carboxamide + L-glutamine = D-erythro-1-(imidazol-4-yl)glycerol 3-phosphate + 5-amino-1-(5-phospho-beta-D-ribosyl)imidazole-4-carboxamide + L-glutamate + H(+). Its pathway is amino-acid biosynthesis; L-histidine biosynthesis; L-histidine from 5-phospho-alpha-D-ribose 1-diphosphate: step 5/9. In terms of biological role, IGPS catalyzes the conversion of PRFAR and glutamine to IGP, AICAR and glutamate. The HisF subunit catalyzes the cyclization activity that produces IGP and AICAR from PRFAR using the ammonia provided by the HisH subunit. In Prochlorococcus marinus (strain MIT 9515), this protein is Imidazole glycerol phosphate synthase subunit HisF.